The following is a 234-amino-acid chain: Large ribosomal subunit protein uL1 (234 aa).

Belongs to the universal ribosomal protein uL1 family. As to quaternary structure, part of the 50S ribosomal subunit.

Its function is as follows. Binds directly to 23S rRNA. The L1 stalk is quite mobile in the ribosome, and is involved in E site tRNA release. Protein L1 is also a translational repressor protein, it controls the translation of the L11 operon by binding to its mRNA. The sequence is that of Large ribosomal subunit protein uL1 from Yersinia enterocolitica serotype O:8 / biotype 1B (strain NCTC 13174 / 8081).